A 68-amino-acid polypeptide reads, in one-letter code: MPKMKTHRGAKKRIKVTGTGKFVIKHSGKSHILTKKDRKRKNHLKKDAVVTETYKRHMQGLLPYGEGR.

It belongs to the bacterial ribosomal protein bL35 family.

The chain is Large ribosomal subunit protein bL35 from Fusobacterium nucleatum subsp. nucleatum (strain ATCC 25586 / DSM 15643 / BCRC 10681 / CIP 101130 / JCM 8532 / KCTC 2640 / LMG 13131 / VPI 4355).